A 511-amino-acid polypeptide reads, in one-letter code: Exodeoxyribonuclease 7 large subunit (511 aa).

The protein belongs to the XseA family. As to quaternary structure, heterooligomer composed of large and small subunits.

The protein resides in the cytoplasm. The enzyme catalyses Exonucleolytic cleavage in either 5'- to 3'- or 3'- to 5'-direction to yield nucleoside 5'-phosphates.. In terms of biological role, bidirectionally degrades single-stranded DNA into large acid-insoluble oligonucleotides, which are then degraded further into small acid-soluble oligonucleotides. In Brucella ovis (strain ATCC 25840 / 63/290 / NCTC 10512), this protein is Exodeoxyribonuclease 7 large subunit.